We begin with the raw amino-acid sequence, 274 residues long: Undecaprenyl-diphosphatase (274 aa).

The next 6 helical transmembrane spans lie at 44–64 (AKVF…LVYW), 85–105 (LNVL…GKAI), 109–129 (LFTP…ILWA), 185–205 (ATDY…VYSL), 215–235 (ADIP…WLCV), and 250–270 (FAWY…SGLV).

This sequence belongs to the UppP family.

Its subcellular location is the cell inner membrane. It catalyses the reaction di-trans,octa-cis-undecaprenyl diphosphate + H2O = di-trans,octa-cis-undecaprenyl phosphate + phosphate + H(+). Functionally, catalyzes the dephosphorylation of undecaprenyl diphosphate (UPP). Confers resistance to bacitracin. The chain is Undecaprenyl-diphosphatase from Acidovorax ebreus (strain TPSY) (Diaphorobacter sp. (strain TPSY)).